The following is a 216-amino-acid chain: Octanoyltransferase (216 aa).

Residues 32-207 (ENSPDELWLV…TFSQLLGYEH (176 aa)) enclose the BPL/LPL catalytic domain. Substrate is bound by residues 71–78 (RGGQVTYH), 138–140 (SLG), and 151–153 (GLA). Residue Cys-169 is the Acyl-thioester intermediate of the active site.

This sequence belongs to the LipB family.

It localises to the cytoplasm. It catalyses the reaction octanoyl-[ACP] + L-lysyl-[protein] = N(6)-octanoyl-L-lysyl-[protein] + holo-[ACP] + H(+). Its pathway is protein modification; protein lipoylation via endogenous pathway; protein N(6)-(lipoyl)lysine from octanoyl-[acyl-carrier-protein]: step 1/2. Catalyzes the transfer of endogenously produced octanoic acid from octanoyl-acyl-carrier-protein onto the lipoyl domains of lipoate-dependent enzymes. Lipoyl-ACP can also act as a substrate although octanoyl-ACP is likely to be the physiological substrate. The protein is Octanoyltransferase of Shewanella amazonensis (strain ATCC BAA-1098 / SB2B).